Here is a 274-residue protein sequence, read N- to C-terminus: Methionine aminopeptidase B (274 aa).

His102 is a binding site for substrate. A divalent metal cation contacts are provided by Asp120, Asp131, and His194. His201 is a substrate binding site. The a divalent metal cation site is built by Glu227 and Glu258.

This sequence belongs to the peptidase M24A family. Methionine aminopeptidase type 1 subfamily. Monomer. Co(2+) serves as cofactor. Requires Zn(2+) as cofactor. It depends on Mn(2+) as a cofactor. The cofactor is Fe(2+).

It catalyses the reaction Release of N-terminal amino acids, preferentially methionine, from peptides and arylamides.. Its function is as follows. Removes the N-terminal methionine from nascent proteins. The N-terminal methionine is often cleaved when the second residue in the primary sequence is small and uncharged (Met-Ala-, Cys, Gly, Pro, Ser, Thr, or Val). Requires deformylation of the N(alpha)-formylated initiator methionine before it can be hydrolyzed. The chain is Methionine aminopeptidase B from Synechocystis sp. (strain ATCC 27184 / PCC 6803 / Kazusa).